The sequence spans 406 residues: Digeranylgeranylglycerophospholipid reductase 2 (406 aa).

FAD-binding residues include glycine 15, glutamate 34, cysteine 45, alanine 46, glycine 48, arginine 99, alanine 123, aspartate 279, glycine 291, and isoleucine 292.

It belongs to the geranylgeranyl reductase family. DGGGPL reductase subfamily. The cofactor is FAD.

The catalysed reaction is a 2,3-bis-O-phytanyl-sn-glycerol 1-phospholipid + 8 oxidized 2[4Fe-4S]-[ferredoxin] = a 2,3-bis-O-(geranylgeranyl)-sn-glycerol 1-phospholipid + 8 reduced 2[4Fe-4S]-[ferredoxin] + 16 H(+). It catalyses the reaction 2,3-bis-O-(phytanyl)-sn-glycerol 1-phosphate + 8 oxidized 2[4Fe-4S]-[ferredoxin] = 2,3-bis-O-(geranylgeranyl)-sn-glycerol 1-phosphate + 8 reduced 2[4Fe-4S]-[ferredoxin] + 16 H(+). It carries out the reaction a 2,3-bis-O-phytanyl-sn-glycerol 1-phospholipid + 8 A = a 2,3-bis-O-(geranylgeranyl)-sn-glycerol 1-phospholipid + 8 AH2. The enzyme catalyses CDP-2,3-bis-O-(geranylgeranyl)-sn-glycerol + 8 AH2 = CDP-2,3-bis-O-(phytanyl)-sn-glycerol + 8 A. The catalysed reaction is archaetidylserine + 8 AH2 = 2,3-bis-O-phytanyl-sn-glycero-3-phospho-L-serine + 8 A. The protein operates within membrane lipid metabolism; glycerophospholipid metabolism. Is involved in the reduction of 2,3-digeranylgeranylglycerophospholipids (unsaturated archaeols) into 2,3-diphytanylglycerophospholipids (saturated archaeols) in the biosynthesis of archaeal membrane lipids. Catalyzes the formation of archaetidic acid (2,3-di-O-phytanyl-sn-glyceryl phosphate) from 2,3-di-O-geranylgeranylglyceryl phosphate (DGGGP) via the hydrogenation of each double bond of the isoprenoid chains. Is also probably able to reduce double bonds of geranyl groups in CDP-2,3-bis-O-(geranylgeranyl)-sn-glycerol and archaetidylserine, thus acting at various stages in the biosynthesis of archaeal membrane lipids. The polypeptide is Digeranylgeranylglycerophospholipid reductase 2 (Methanococcoides burtonii (strain DSM 6242 / NBRC 107633 / OCM 468 / ACE-M)).